The primary structure comprises 411 residues: Putative polysaccharide ligase RC0486 (411 aa).

A run of 10 helical transmembrane segments spans residues 15–35 (LGML…LISF), 78–98 (GITM…IHLI), 101–121 (LATF…SNSA), 133–153 (LIFG…SNGF), 166–186 (MLDR…IILL), 207–227 (ISDS…FILT), 233–253 (IFFK…PVIA), 328–348 (ILQI…CLVY), 361–381 (NFKA…MISY), and 383–403 (IWQI…KLLV).

It belongs to the O-antigen ligase family.

The protein resides in the membrane. This Rickettsia conorii (strain ATCC VR-613 / Malish 7) protein is Putative polysaccharide ligase RC0486.